Consider the following 469-residue polypeptide: SHC-transforming protein 1 (469 aa).

Residues 1 to 26 form a disordered region; the sequence is MNKLSGGGGRRTRVEGGQLGGEEWTR. Ser-29 bears the Phosphoserine mark. Position 44 is an N6-acetyllysine (Lys-44). Residues 46 to 229 form the PID domain; the sequence is MGPGVSYLVR…AGFDGSAWDE (184 aa). Positions 230-373 are CH1; the sequence is EEEELPDHQY…SMAEQLQGES (144 aa). A phosphotyrosine mark is found at Tyr-239, Tyr-240, and Tyr-313. The segment at 322-344 is disordered; that stretch reads ARQAGGGAGPPNPSVNGSAPRDL. Ser-339 is modified (phosphoserine). The 92-residue stretch at 374–465 folds into the SH2 domain; that stretch reads WFHGKLSRRE…GSELCLQQPV (92 aa).

In terms of assembly, interacts with CPNE3; this interaction may mediate the binding of CPNE3 with ERBB2. Interacts with the NPXY motif of tyrosine-phosphorylated IGF1R and INSR in vitro via the PID domain. Once activated, binds to GRB2. Interacts with tyrosine-phosphorylated CD3T and DDR2. Interacts with the N-terminal region of APS. Interacts with phosphorylated LRP1 and IRS4. Interacts with INPP5D/SHIP1 and INPPL1/SHIP2. Interacts with ALK, GAB2, GRB7 and KIT. Interacts with PTPN6/SHP (tyrosine phosphorylated). Identified in a complex containing FGFR4, NCAM1, CDH2, PLCG1, FRS2A, SRC, SHC1, GAP43 and CTTN. Interacts with EPHB1 and GRB2; activates the MAPK/ERK cascade to regulate cell migration. Interacts with PDGFRB (tyrosine-phosphorylated). Interacts with ERBB4. Interacts with TEK/TIE2 (tyrosine-phosphorylated). Interacts with PTK2/FAK1. Interacts with FLT4 (tyrosine-phosphorylated). Interacts with the Trk receptors NTRK1, NTRK2 and NTRK3; in a phosphotyrosine-dependent manner. Interacts with CEACAM1; this interaction is CEACAM1-phosphorylation-dependent and mediates interaction with EGFR or INSR resulting in decrease coupling of SHC1 to the MAPK3/ERK1-MAPK1/ERK2 pathway. Interacts (via PID domain) with PEAK1 (when phosphorylated). Found in a complex with PPP1CA, PPP1CC, SHC1 and PEAK1. In terms of processing, phosphorylated by activated epidermal growth factor receptor. Phosphorylated in response to KIT signaling. Tyrosine phosphorylated in response to FLT3 signaling and by ligand-activated ALK. Tyrosine phosphorylated by TEK/TIE2. Tyrosine phosphorylated by ligand-activated PDGFRB. May be tyrosine phosphorylated by activated PTK2/FAK1. Dephosphorylation by PTPN2 may regulate interaction with GRB2. Phosphorylated in response to FLT4 signaling. Tyrosine phosphorylated by activated PTK2B/PYK2.

The protein resides in the cytoplasm. Its subcellular location is the cell junction. The protein localises to the focal adhesion. Signaling adapter that couples activated growth factor receptors to signaling pathways. Participates in a signaling cascade initiated by activated KIT and KITLG/SCF. Participates in signaling downstream of the angiopoietin receptor TEK/TIE2, and plays a role in the regulation of endothelial cell migration and sprouting angiogenesis. The protein is SHC-transforming protein 1 (Shc1) of Rattus norvegicus (Rat).